A 323-amino-acid polypeptide reads, in one-letter code: tRNA-dihydrouridine(16) synthase (323 aa).

Residues 7-9 and Q68 contribute to the FMN site; that span reads PME. C98 functions as the Proton donor in the catalytic mechanism. FMN contacts are provided by residues K139, 199-201, and 223-224; these read NGE and GR.

It belongs to the Dus family. DusC subfamily. The cofactor is FMN.

It catalyses the reaction 5,6-dihydrouridine(16) in tRNA + NADP(+) = uridine(16) in tRNA + NADPH + H(+). The enzyme catalyses 5,6-dihydrouridine(16) in tRNA + NAD(+) = uridine(16) in tRNA + NADH + H(+). Catalyzes the synthesis of 5,6-dihydrouridine (D), a modified base found in the D-loop of most tRNAs, via the reduction of the C5-C6 double bond in target uridines. Specifically modifies U16 in tRNAs. The sequence is that of tRNA-dihydrouridine(16) synthase from Pseudomonas putida (strain ATCC 47054 / DSM 6125 / CFBP 8728 / NCIMB 11950 / KT2440).